Here is a 216-residue protein sequence, read N- to C-terminus: Hexitol phosphatase A (216 aa).

The active-site Nucleophile is the aspartate 9. 2 residues coordinate a divalent metal cation: aspartate 9 and aspartate 11. Substrate is bound by residues 9 to 11 (DLD), 106 to 107 (TS), and lysine 138. The active-site Proton donor is the aspartate 11. Aspartate 163 is an a divalent metal cation binding site.

The protein belongs to the HAD-like hydrolase superfamily. CbbY/CbbZ/Gph/YieH family. Requires Mg(2+) as cofactor. It depends on Mn(2+) as a cofactor. Co(2+) serves as cofactor.

The catalysed reaction is sugar phosphate + H2O = sugar + phosphate.. It carries out the reaction D-mannitol 1-phosphate + H2O = D-mannitol + phosphate. The enzyme catalyses D-sorbitol 6-phosphate + H2O = D-sorbitol + phosphate. Its function is as follows. Sugar-phosphate phosphohydrolase that appears to contribute to butanol tolerance. Catalyzes the dephosphorylation of D-mannitol 1-phosphate and D-sorbitol 6-phosphate. Is also able to dephosphorylate other sugar phosphates in vitro including ribose-5-phosphate (Rib5P), 2-deoxyribose-5-phosphate, fructose-1-phosphate (Fru1P), fructose-6-phosphate (Fru6P), and glucose-6-phosphate (Glu6P). Selectively hydrolyzes beta-D-glucose-1-phosphate (bGlu1P) and has no activity with the alpha form. This chain is Hexitol phosphatase A, found in Escherichia coli (strain K12).